The chain runs to 292 residues: Shikimate dehydrogenase (NADP(+)) (292 aa).

Residues 25–27 (SKS) and threonine 72 each bind shikimate. Lysine 76 serves as the catalytic Proton acceptor. Residues asparagine 97 and aspartate 113 each contribute to the shikimate site. NADP(+) contacts are provided by residues 137–141 (GAGGA), 161–166 (NRTQSK), and methionine 230. Tyrosine 232 serves as a coordination point for shikimate. Glycine 254 is a binding site for NADP(+).

It belongs to the shikimate dehydrogenase family. Homodimer.

The enzyme catalyses shikimate + NADP(+) = 3-dehydroshikimate + NADPH + H(+). The protein operates within metabolic intermediate biosynthesis; chorismate biosynthesis; chorismate from D-erythrose 4-phosphate and phosphoenolpyruvate: step 4/7. Involved in the biosynthesis of the chorismate, which leads to the biosynthesis of aromatic amino acids. Catalyzes the reversible NADPH linked reduction of 3-dehydroshikimate (DHSA) to yield shikimate (SA). This Shewanella sp. (strain MR-4) protein is Shikimate dehydrogenase (NADP(+)).